The following is a 312-amino-acid chain: Ankyrin repeat family A protein 2 (312 aa).

5 ANK repeats span residues 147–179, 180–212, 213–245, 246–278, and 279–312; these read ANSL…HTDE, EGFT…LLGK, GRES…EYDW, NGGT…IETD, and SGYN…NIRE.

As to quaternary structure, interacts (via ANK repeats) with CCDC8 (via PxLPxI/L motif); mediates the interaction with the 3M complex which is composed of CCDC8, CUL7 and OBSL1. Interacts (via ANK repeats) with HDAC4 (via PxLPxI/L motif). Interacts (via ANK repeats) with HDAC5 (via PxLPxI/L motif). Interacts (via ANK repeats) with LRP2/megalin (via PxLPxI/L motif). Interacts (via ANK repeats) with RFX7 (via PxLPxI/L motif). Interacts with AHRR. Interacts with NEK6.

It is found in the cytoplasm. It localises to the cytoskeleton. The protein localises to the membrane. Functionally, may regulate the interaction between the 3M complex and the histone deacetylases HDAC4 and HDAC5. May also regulate LRP2/megalin. The protein is Ankyrin repeat family A protein 2 (Ankra2) of Mus musculus (Mouse).